We begin with the raw amino-acid sequence, 1079 residues long: DNA ligase 4 (1079 aa).

The interval 1–20 (MAVHAPYNHAPPPTQEINGQ) is disordered. The ATP site is built by Glu-295, Lys-297, Leu-298, Arg-302, Glu-357, Phe-395, Glu-460, Lys-465, Lys-482, and Lys-484. Lys-297 functions as the N6-AMP-lysine intermediate in the catalytic mechanism. Glu-357 is a binding site for Mg(2+). Glu-460 lines the Mg(2+) pocket. The BRCT 1 domain occupies 699 to 789 (VETSIFSDMT…TALPFLKEFL (91 aa)). Positions 838–847 (DGEDKDEIDV) are enriched in acidic residues. Positions 838–942 (DGEDKDEIDV…SDVGVNGDDY (105 aa)) are disordered. Basic and acidic residues-rich tracts occupy residues 848-878 (EESR…KKLQ) and 900-914 (MSLK…ERSR). The region spanning 968–1078 (DEDRIFYHLA…TLLDEDLYKP (111 aa)) is the BRCT 2 domain.

Belongs to the ATP-dependent DNA ligase family. It depends on Mg(2+) as a cofactor.

The protein localises to the nucleus. It carries out the reaction ATP + (deoxyribonucleotide)n-3'-hydroxyl + 5'-phospho-(deoxyribonucleotide)m = (deoxyribonucleotide)n+m + AMP + diphosphate.. Its function is as follows. DNA ligase involved in DNA non-homologous end joining (NHEJ); required for double-strand break (DSB) repair. This is DNA ligase 4 (LIG4) from Cryptococcus neoformans var. neoformans serotype D (strain JEC21 / ATCC MYA-565) (Filobasidiella neoformans).